We begin with the raw amino-acid sequence, 159 residues long: Ribosomal RNA large subunit methyltransferase H (159 aa).

S-adenosyl-L-methionine contacts are provided by residues Leu-76, Gly-108, and Phe-127 to Phe-132.

The protein belongs to the RNA methyltransferase RlmH family. In terms of assembly, homodimer.

Its subcellular location is the cytoplasm. It catalyses the reaction pseudouridine(1915) in 23S rRNA + S-adenosyl-L-methionine = N(3)-methylpseudouridine(1915) in 23S rRNA + S-adenosyl-L-homocysteine + H(+). Functionally, specifically methylates the pseudouridine at position 1915 (m3Psi1915) in 23S rRNA. The sequence is that of Ribosomal RNA large subunit methyltransferase H from Staphylococcus aureus (strain Mu3 / ATCC 700698).